The chain runs to 67 residues: MSLFPVIVVFGLSFPPIFFKLLLSLAIFWLVRRMLVPTGIYDFVWHPALFNTALYCCLFYLISRLFV.

2 consecutive transmembrane segments (helical) span residues 3–23 and 43–63; these read LFPVIVVFGLSFPPIFFKLLL and FVWHPALFNTALYCCLFYLIS.

It belongs to the AaeX family.

Its subcellular location is the cell membrane. In Salmonella gallinarum (strain 287/91 / NCTC 13346), this protein is Protein AaeX.